The primary structure comprises 119 residues: Hemerythrin subunit A (119 aa).

Positions 26, 55, 59, 74, 78, 107, and 112 each coordinate Fe cation.

It belongs to the hemerythrin family.

Its function is as follows. Hemerythrin is a respiratory protein in blood cells of certain marine worms. The oxygen-binding site in each chain contains two iron atoms. This is Hemerythrin subunit A from Sipunculus nudus (Sipunculan worm).